Reading from the N-terminus, the 153-residue chain is UPF0756 membrane protein lin1603 (153 aa).

4 helical membrane passes run 6 to 26 (MLFL…SLII), 54 to 74 (WGVT…QIGF), 80 to 100 (SFKS…SILA), and 117 to 137 (LVFG…GPVI).

The protein belongs to the UPF0756 family.

The protein resides in the cell membrane. The sequence is that of UPF0756 membrane protein lin1603 from Listeria innocua serovar 6a (strain ATCC BAA-680 / CLIP 11262).